A 199-amino-acid polypeptide reads, in one-letter code: Dephospho-CoA kinase (199 aa).

The DPCK domain maps to 11 to 199 (RIGLTGGIAS…DLHDQLDALL (189 aa)). 19–24 (ASGKSS) is an ATP binding site.

Belongs to the CoaE family.

The protein localises to the cytoplasm. The enzyme catalyses 3'-dephospho-CoA + ATP = ADP + CoA + H(+). Its pathway is cofactor biosynthesis; coenzyme A biosynthesis; CoA from (R)-pantothenate: step 5/5. Functionally, catalyzes the phosphorylation of the 3'-hydroxyl group of dephosphocoenzyme A to form coenzyme A. The chain is Dephospho-CoA kinase from Synechococcus sp. (strain CC9902).